We begin with the raw amino-acid sequence, 185 residues long: Alcohol dehydrogenase 1 (185 aa).

NAD(+)-binding positions include G10–G15, D34, K39, V103–V105, and R180.

Belongs to the zinc-containing alcohol dehydrogenase family. Class-I subfamily. Homodimer. Zn(2+) is required as a cofactor.

It localises to the cytoplasm. It catalyses the reaction a primary alcohol + NAD(+) = an aldehyde + NADH + H(+). It carries out the reaction a secondary alcohol + NAD(+) = a ketone + NADH + H(+). The chain is Alcohol dehydrogenase 1 (ADH1) from Anas platyrhynchos (Mallard).